The primary structure comprises 252 residues: Small ribosomal subunit protein uS2 (252 aa).

Positions 231–252 (SVESTAQEQVEETAQEETAVEA) are disordered. Residues 239-252 (QVEETAQEETAVEA) show a composition bias toward acidic residues.

The protein belongs to the universal ribosomal protein uS2 family.

This chain is Small ribosomal subunit protein uS2, found in Acetivibrio thermocellus (strain ATCC 27405 / DSM 1237 / JCM 9322 / NBRC 103400 / NCIMB 10682 / NRRL B-4536 / VPI 7372) (Clostridium thermocellum).